The primary structure comprises 319 residues: Malate dehydrogenase (319 aa).

NAD(+)-binding positions include 11-16 (GAGNVG) and Asp-36. Substrate-binding residues include Arg-85 and Arg-91. NAD(+) contacts are provided by residues Asn-98 and 121–123 (VSN). Residues Asn-123 and Arg-154 each coordinate substrate. The active-site Proton acceptor is the His-178.

The protein belongs to the LDH/MDH superfamily. MDH type 3 family.

The catalysed reaction is (S)-malate + NAD(+) = oxaloacetate + NADH + H(+). Its function is as follows. Catalyzes the reversible oxidation of malate to oxaloacetate. In Sulfurimonas denitrificans (strain ATCC 33889 / DSM 1251) (Thiomicrospira denitrificans (strain ATCC 33889 / DSM 1251)), this protein is Malate dehydrogenase.